A 308-amino-acid chain; its full sequence is 15-cis-phytoene synthase (308 aa).

This sequence belongs to the phytoene/squalene synthase family. ATP serves as cofactor. Requires Mn(2+) as cofactor. It depends on Mg(2+) as a cofactor.

It catalyses the reaction 2 (2E,6E,10E)-geranylgeranyl diphosphate = 15-cis-phytoene + 2 diphosphate. It functions in the pathway carotenoid biosynthesis; phytoene biosynthesis. Its function is as follows. Involved in the biosynthesis of carotenoids. Catalyzes the condensation of two molecules of geranylgeranyl diphosphate (GGPP) to give prephytoene diphosphate (PPPP) and the subsequent rearrangement of the cyclopropylcarbinyl intermediate to yield 15-cis-phytoene. This Synechococcus elongatus (strain ATCC 33912 / PCC 7942 / FACHB-805) (Anacystis nidulans R2) protein is 15-cis-phytoene synthase (crtB).